We begin with the raw amino-acid sequence, 1039 residues long: Tetratricopeptide repeat protein 1 (1039 aa).

12 TPR repeats span residues 51-84 (REFW…LKDS), 175-208 (ILGF…NPQF), 210-243 (PDPR…DPKN), 251-288 (GLYY…RNND), 326-359 (ADGY…DDRH), 361-393 (LSSV…NQSC), 437-469 (SDLY…LESA), 514-547 (LLLD…HPSF), 634-667 (EFRV…DPKN), 701-734 (ATTL…TGES), 737-770 (YGVL…ATLA), and 799-832 (PENS…EHPP). The stretch at 838–929 (IEQRAKMAKN…SQQKASEDDM (92 aa)) forms a coiled coil. The interval 912-1039 (EEVLEWRKSQ…LNLFSEEDEE (128 aa)) is disordered. Residues 927–936 (DDMSLSDDEE) show a composition bias toward acidic residues. Phosphoserine is present on residues S930 and S932. Residues 940 to 953 (GKKKKKDRKKRKSK) show a composition bias toward basic residues. Phosphoserine occurs at positions 959, 961, 964, and 998. Over residues 992–1006 (YTFDQDSDAEGNQEE) the composition is skewed to acidic residues. The segment covering 1007 to 1018 (EVSRTIEEKQDN) has biased composition (basic and acidic residues).

Its function is as follows. Involved in promoting potassiumm ion uptake. The protein is Tetratricopeptide repeat protein 1 (tpr1) of Schizosaccharomyces pombe (strain 972 / ATCC 24843) (Fission yeast).